The following is a 300-amino-acid chain: MTLAIPLELSLFDPTSADFLVPLISFSAYFSVKSFTMRPCPRLLTRKLNYPGHIPLSPAQNALLAVGSGVVGVLDVTRGDLIASLSESTAGIFLPALHEKMKMTPEGRQIMKDRPEITNKTIEKLKELKRGTLGREYVEWLGGGGLEPESRAPVQYIDSPLLAYTMLRYRQTHDLYHTLFSLPPTLPHELSLKVLEFSNMSLPVALLSSVFGPLRLKRKETWTRDWVPWALRTGREGRSLVTVYWEKRWEQGIGELRRELGVERNDADGVEARWGGYRKIREVERELRRKGEWVDEPEDW.

Zn(2+) is bound by residues H173, D174, H177, and E189.

The protein belongs to the COQ4 family. In terms of assembly, component of a multi-subunit COQ enzyme complex, composed of at least COQ3, COQ4, COQ5, COQ6, COQ7 and COQ9. Zn(2+) serves as cofactor.

It localises to the mitochondrion inner membrane. The enzyme catalyses a 4-hydroxy-3-methoxy-5-(all-trans-polyprenyl)benzoate + H(+) = a 2-methoxy-6-(all-trans-polyprenyl)phenol + CO2. It participates in cofactor biosynthesis; ubiquinone biosynthesis. Lyase that catalyzes the C1-decarboxylation of 4-hydroxy-3-methoxy-5-(all-trans-polyprenyl)benzoic acid into 2-methoxy-6-(all-trans-polyprenyl)phenol during ubiquinone biosynthesis. The polypeptide is Ubiquinone biosynthesis protein COQ4, mitochondrial (Cryptococcus neoformans var. neoformans serotype D (strain B-3501A) (Filobasidiella neoformans)).